Consider the following 407-residue polypeptide: Tryptophan synthase beta chain (407 aa).

Residue Lys98 is modified to N6-(pyridoxal phosphate)lysine.

The protein belongs to the TrpB family. As to quaternary structure, tetramer of two alpha and two beta chains. The cofactor is pyridoxal 5'-phosphate.

It catalyses the reaction (1S,2R)-1-C-(indol-3-yl)glycerol 3-phosphate + L-serine = D-glyceraldehyde 3-phosphate + L-tryptophan + H2O. It functions in the pathway amino-acid biosynthesis; L-tryptophan biosynthesis; L-tryptophan from chorismate: step 5/5. Functionally, the beta subunit is responsible for the synthesis of L-tryptophan from indole and L-serine. The protein is Tryptophan synthase beta chain of Bradyrhizobium sp. (strain ORS 278).